We begin with the raw amino-acid sequence, 270 residues long: High choriolytic enzyme 1 (270 aa).

The first 20 residues, 1-20 (MNLAPSTCLLLLFLLDIAQA), serve as a signal peptide directing secretion. Residues 21–70 (LPVWDEEGHEEGHEEGDGDDFVDITTRILTSNNNTDQLLLEGDLVAPTNR) constitute a propeptide, activation peptide. An N-linked (GlcNAc...) asparagine glycan is attached at asparagine 53. Residues 71 to 270 (NAMKCWSSSC…TRINVLYNCR (200 aa)) form the Peptidase M12A domain. 3 cysteine pairs are disulfide-bonded: cysteine 75–cysteine 80, cysteine 120–cysteine 269, and cysteine 141–cysteine 161. A Zn(2+)-binding site is contributed by histidine 169. Residue glutamate 170 is part of the active site. Residues histidine 173 and histidine 179 each contribute to the Zn(2+) site.

Requires Zn(2+) as cofactor.

It localises to the zymogen granule. It carries out the reaction Hydrolysis of the inner layer of fish egg envelope. Also hydrolysis of casein and small molecule substrates such as succinyl-Leu-Leu-Val-Tyr-|-7-(4-methyl)coumarylamide.. Participates in the breakdown of the egg envelope, which is derived from the egg extracellular matrix, at the time of hatching. Thus allowing the newly hatched fish to swim free. HCE binds tightly to the egg envelope while it exerts the choriolytic swelling action. The polypeptide is High choriolytic enzyme 1 (hcea) (Oryzias latipes (Japanese rice fish)).